Reading from the N-terminus, the 545-residue chain is CTP synthase (545 aa).

Residues 1-265 (MNGIKHIFIT…DKFVIKHLDL (265 aa)) form an amidoligase domain region. Serine 15 is a binding site for CTP. Serine 15 is a UTP binding site. ATP-binding positions include 16–21 (SIGKGL) and aspartate 73. Mg(2+) contacts are provided by aspartate 73 and glutamate 141. Residues 148-150 (DIE), 188-193 (KTKPTQ), and lysine 224 each bind CTP. Residues 188–193 (KTKPTQ) and lysine 224 each bind UTP. In terms of domain architecture, Glutamine amidotransferase type-1 spans 290–534 (EIAIIGKYTG…VAAALARKEI (245 aa)). Glycine 349 is a binding site for L-glutamine. Cysteine 376 serves as the catalytic Nucleophile; for glutamine hydrolysis. Residues 377 to 380 (LGMQ), glutamate 400, and arginine 460 each bind L-glutamine. Active-site residues include histidine 507 and glutamate 509.

The protein belongs to the CTP synthase family. In terms of assembly, homotetramer.

It catalyses the reaction UTP + L-glutamine + ATP + H2O = CTP + L-glutamate + ADP + phosphate + 2 H(+). The enzyme catalyses L-glutamine + H2O = L-glutamate + NH4(+). The catalysed reaction is UTP + NH4(+) + ATP = CTP + ADP + phosphate + 2 H(+). It participates in pyrimidine metabolism; CTP biosynthesis via de novo pathway; CTP from UDP: step 2/2. With respect to regulation, allosterically activated by GTP, when glutamine is the substrate; GTP has no effect on the reaction when ammonia is the substrate. The allosteric effector GTP functions by stabilizing the protein conformation that binds the tetrahedral intermediate(s) formed during glutamine hydrolysis. Inhibited by the product CTP, via allosteric rather than competitive inhibition. In terms of biological role, catalyzes the ATP-dependent amination of UTP to CTP with either L-glutamine or ammonia as the source of nitrogen. Regulates intracellular CTP levels through interactions with the four ribonucleotide triphosphates. This is CTP synthase from Tropheryma whipplei (strain Twist) (Whipple's bacillus).